We begin with the raw amino-acid sequence, 257 residues long: MCIKRKKTWIAFLAVVCSFCLTGCLKEGGDSNSEKFIVGTNATYPPFEFVDKRGEVVGFDIDLAREISNKLGKTLDVREFSFDALILNLKQHRIDAVITGMSITPSRLKEILMIPYYGEEIKHLVLVFKGENKHPLPLTQYRSVAVQTGTYQEAYLQSLSEVHIRSFDSTLEVLMEVMHGKSPVAVLEPSIAQVVLKDFPALSTATIDLPEDQWVLGYGIGVASDRPALALKIEAAVQEIRKEGVLAELEQKWGLNN.

Residues 1 to 23 (MCIKRKKTWIAFLAVVCSFCLTG) form the signal peptide. The L-arginine site is built by N41, E48, G100, S102, R107, and Y151.

It belongs to the bacterial solute-binding protein 3 family.

It is found in the secreted. Its subcellular location is the cell surface. Its function is as follows. Probably part of an ABC transporter complex involved in arginine transport. Binds arginine. Interacts with host epithelial cells, suggesting a role in host-cell adhesion during infection. This chain is Probable ABC transporter arginine-binding protein ArtJ, found in Chlamydia trachomatis serovar D (strain ATCC VR-885 / DSM 19411 / UW-3/Cx).